The primary structure comprises 225 residues: 2-C-methyl-D-erythritol 4-phosphate cytidylyltransferase (225 aa).

It belongs to the IspD/TarI cytidylyltransferase family. IspD subfamily.

It catalyses the reaction 2-C-methyl-D-erythritol 4-phosphate + CTP + H(+) = 4-CDP-2-C-methyl-D-erythritol + diphosphate. The protein operates within isoprenoid biosynthesis; isopentenyl diphosphate biosynthesis via DXP pathway; isopentenyl diphosphate from 1-deoxy-D-xylulose 5-phosphate: step 2/6. In terms of biological role, catalyzes the formation of 4-diphosphocytidyl-2-C-methyl-D-erythritol from CTP and 2-C-methyl-D-erythritol 4-phosphate (MEP). This is 2-C-methyl-D-erythritol 4-phosphate cytidylyltransferase from Haemophilus influenzae (strain PittEE).